Reading from the N-terminus, the 458-residue chain is MASNTVSAQGGSNRPVRDFSNIQDVAQFLLFDPIWNEQPGSIVPWKMNREQALAERYPELQTSEPSEDYSGPVESLELLPLEIKLDIMQYLSWEQISWCKHPWLWTRWYKDNVVRVSAITFEDFQREYAFPEKIQEIHFTDTRAEEIKAILETTPNVTRLVIRRIDDMNYNTHGDLGLDDLEFLTHLMVEDACGFTDFWAPSLTHLTIKNLDMHPRWFGPVMDGIKSMQSTLKYLYIFETYGVNKPFVQWCTDNIETFYCTNSYRYENVPRPIYVWVLFQEDEWHGYRVEDNKFHRRYMYSTILHKRDTDWVENNPLKTPAQVEMYKFLLRISQLNRDGTGYESDSDPENEHFDDESFSSGEEDSSDEDDPTWAPDSDDSDWETETEEEPSVAARILEKGKLTITNLMKSLGFKPKPKKIQSIDRYFCSLDSNYNSEDEDFEYDSDSEDDDSDSEDDC.

Disordered stretches follow at residues 339-397 and 434-458; these read GTGY…ARIL and YNSEDEDFEYDSDSEDDDSDSEDDC. Acidic residues-rich tracts occupy residues 344-390 and 436-458; these read SDSD…EEEP and SEDEDFEYDSDSEDDDSDSEDDC.

This is an uncharacterized protein from Invertebrate iridescent virus 3 (IIV-3).